Reading from the N-terminus, the 58-residue chain is UPF0391 membrane protein Plav_0056 (58 aa).

The next 2 helical transmembrane spans lie at Trp4–Val24 and Ile30–Val50.

It belongs to the UPF0391 family.

The protein localises to the cell membrane. This chain is UPF0391 membrane protein Plav_0056, found in Parvibaculum lavamentivorans (strain DS-1 / DSM 13023 / NCIMB 13966).